The sequence spans 187 residues: Elongation factor P (187 aa).

Belongs to the elongation factor P family.

It localises to the cytoplasm. It functions in the pathway protein biosynthesis; polypeptide chain elongation. Its function is as follows. Involved in peptide bond synthesis. Stimulates efficient translation and peptide-bond synthesis on native or reconstituted 70S ribosomes in vitro. Probably functions indirectly by altering the affinity of the ribosome for aminoacyl-tRNA, thus increasing their reactivity as acceptors for peptidyl transferase. In Rhodococcus opacus (strain B4), this protein is Elongation factor P.